Reading from the N-terminus, the 321-residue chain is GDP-L-fucose synthase (321 aa).

14–20 provides a ligand contact to NADP(+); that stretch reads GGSGLVG. Tyr143 (proton donor/acceptor) is an active-site residue. NADP(+) contacts are provided by residues Lys147, 170–173, and His186; that span reads PTNV. Substrate contacts are provided by Lys194, Trp208, Arg215, and Asp277.

This sequence belongs to the NAD(P)-dependent epimerase/dehydratase family. Fucose synthase subfamily. Homodimer.

The enzyme catalyses GDP-beta-L-fucose + NADP(+) = GDP-4-dehydro-alpha-D-rhamnose + NADPH + H(+). It functions in the pathway nucleotide-sugar biosynthesis; GDP-L-fucose biosynthesis via de novo pathway; GDP-L-fucose from GDP-alpha-D-mannose: step 2/2. Its function is as follows. Catalyzes the two-step NADP-dependent conversion of GDP-4-dehydro-6-deoxy-D-mannose to GDP-fucose, involving an epimerase and a reductase reaction. The protein is GDP-L-fucose synthase (GFUS) of Pongo abelii (Sumatran orangutan).